A 234-amino-acid polypeptide reads, in one-letter code: Enolase-phosphatase E1 (234 aa).

Residues 212-234 (RPGNYPQPQHSHFKISSFEGLNP) form a disordered region.

This sequence belongs to the HAD-like hydrolase superfamily. MasA/MtnC family. In terms of assembly, monomer. Requires Mg(2+) as cofactor.

It carries out the reaction 5-methylsulfanyl-2,3-dioxopentyl phosphate + H2O = 1,2-dihydroxy-5-(methylsulfanyl)pent-1-en-3-one + phosphate. Its pathway is amino-acid biosynthesis; L-methionine biosynthesis via salvage pathway; L-methionine from S-methyl-5-thio-alpha-D-ribose 1-phosphate: step 3/6. It functions in the pathway amino-acid biosynthesis; L-methionine biosynthesis via salvage pathway; L-methionine from S-methyl-5-thio-alpha-D-ribose 1-phosphate: step 4/6. Its function is as follows. Bifunctional enzyme that catalyzes the enolization of 2,3-diketo-5-methylthiopentyl-1-phosphate (DK-MTP-1-P) into the intermediate 2-hydroxy-3-keto-5-methylthiopentenyl-1-phosphate (HK-MTPenyl-1-P), which is then dephosphorylated to form the acireductone 1,2-dihydroxy-3-keto-5-methylthiopentene (DHK-MTPene). This is Enolase-phosphatase E1 from Leptospira interrogans serogroup Icterohaemorrhagiae serovar copenhageni (strain Fiocruz L1-130).